The chain runs to 604 residues: Elongation factor 4 (604 aa).

Residues Glu4–Lys186 enclose the tr-type G domain. Residues Asp16 to Thr21 and Asn133 to Asp136 each bind GTP.

It belongs to the TRAFAC class translation factor GTPase superfamily. Classic translation factor GTPase family. LepA subfamily.

It localises to the cell inner membrane. The enzyme catalyses GTP + H2O = GDP + phosphate + H(+). Required for accurate and efficient protein synthesis under certain stress conditions. May act as a fidelity factor of the translation reaction, by catalyzing a one-codon backward translocation of tRNAs on improperly translocated ribosomes. Back-translocation proceeds from a post-translocation (POST) complex to a pre-translocation (PRE) complex, thus giving elongation factor G a second chance to translocate the tRNAs correctly. Binds to ribosomes in a GTP-dependent manner. The protein is Elongation factor 4 of Solibacter usitatus (strain Ellin6076).